The following is a 365-amino-acid chain: Testis-specific serine/threonine-protein kinase 1 (365 aa).

Residues 12–272 (YIMGINLGEG…IDEILNHCWV (261 aa)) form the Protein kinase domain. Residues 18–26 (LGEGSYAKV) and Lys-41 each bind ATP. Asp-136 (proton acceptor) is an active-site residue. Thr-174 carries the phosphothreonine modification. A disordered region spans residues 282 to 365 (GAINKEGESS…HPQQPSETHT (84 aa)). Over residues 303 to 330 (GADKKSATKLEPREEARSEARSESKPQE) the composition is skewed to basic and acidic residues. Residues 331–347 (DTLQVVRQSENVGLSSE) are compositionally biased toward polar residues.

The protein belongs to the protein kinase superfamily. CAMK Ser/Thr protein kinase family. Interacts with TSSK2. Interacts with HSP90; this interaction stabilizes TSSK1. Requires Mg(2+) as cofactor. In terms of processing, autophosphorylated. Ubiquitinated; HSP90 activity negatively regulates ubiquitination and degradation. As to expression, testis-specific. Expressed only in postmeiotic spermatids at the final stages of cytodifferentiation in the seminiferous tubules (at protein level). Not detected in released sperms in the lumen of the seminiferous tubules and the epididymis.

Its subcellular location is the cytoplasm. It localises to the cytoplasmic vesicle. The protein localises to the secretory vesicle. It is found in the acrosome. The protein resides in the cell projection. Its subcellular location is the cilium. It localises to the flagellum. It catalyses the reaction L-seryl-[protein] + ATP = O-phospho-L-seryl-[protein] + ADP + H(+). The catalysed reaction is L-threonyl-[protein] + ATP = O-phospho-L-threonyl-[protein] + ADP + H(+). With respect to regulation, activated by phosphorylation on Thr-174, potentially by autophosphorylation. Functionally, testis-specific serine/threonine-protein kinase required during spermatid development. Phosphorylates 'Ser-281' of TSKS. Involved in the late stages of spermatogenesis, during the reconstruction of the cytoplasm. During spermatogenesis, required for the transformation of a ring-shaped structure around the base of the flagellum originating from the chromatoid body. This Mus musculus (Mouse) protein is Testis-specific serine/threonine-protein kinase 1 (Tssk1b).